The primary structure comprises 384 residues: MAP kinase-activated protein kinase 3 (384 aa).

At methionine 1 the chain carries N-acetylmethionine. A disordered region spans residues 1–22 (MDVETAEEQGGPAPPSGVPCGP). One can recognise a Protein kinase domain in the interval 46–306 (QLSKQVLGLG…ITQFMNHPWI (261 aa)). Residues 52 to 60 (LGLGVNGKV) and lysine 75 contribute to the ATP site. The Proton acceptor role is filled by aspartate 168. The residue at position 203 (threonine 203) is a Phosphothreonine; by MAPK14. Serine 253 is subject to Phosphoserine; by MAPK14. Serine 309 carries the post-translational modification Phosphoserine; by autocatalysis. The autoinhibitory helix stretch occupies residues 309–345 (SMVVPQTPLHTARVLQEDRDHWDEVKEEMTSALATMR). Position 315 is a phosphothreonine; by MAPK14 (threonine 315). The Nuclear export signal (NES) motif lies at 337 to 346 (MTSALATMRV). The tract at residues 347-371 (DYDQVKIKDLKTSNNRLLNKRRKKQ) is p38 MAPK-binding site. Short sequence motifs (bipartite nuclear localization signal) lie at residues 352-355 (KIKD) and 366-370 (KRRKK). The disordered stretch occupies residues 359–384 (SNNRLLNKRRKKQAGSSSGSQGCNNQ). The span at 373-384 (GSSSGSQGCNNQ) shows a compositional bias: low complexity.

Belongs to the protein kinase superfamily. CAMK Ser/Thr protein kinase family. Heterodimer with p38-alpha/MAPK14. The heterodimer with p38-alpha/MAPK14 forms a stable complex: molecules are positioned 'face to face' so that the ATP-binding sites of both kinases are at the heterodimer interface. Interacts with TCF3 and with polycomb proteins, such as PCH2 and BMI1/PCGF4. Post-translationally, phosphorylated and activated by MAPK1/ERK2 and MAPK3/ERK1. Phosphorylated and activated by MAP kinase p38-alpha/MAPK14 at Thr-203, Ser-253 and Thr-315.

It is found in the nucleus. Its subcellular location is the cytoplasm. The catalysed reaction is L-seryl-[protein] + ATP = O-phospho-L-seryl-[protein] + ADP + H(+). It catalyses the reaction L-threonyl-[protein] + ATP = O-phospho-L-threonyl-[protein] + ADP + H(+). Activated following phosphorylation by p38-alpha/MAPK14 following various stresses. Inhibited by ligand 5B (2'-[2-(1,3-benzodioxol-5-yl)pyrimidin-4-yl]-5',6'-dihydrospiro[piperidine-4,7'-pyrrolo[3,2-c]pyridin]- 4'(1'h)-one) and ligand P4O (2-[2-(2-fluorophenyl)pyridin-4-yl]-1,5,6,7-tetrahydro- 4h-pyrrolo[3,2-c]pyridin-4-one), 2 ATP-competitive inhibitors. In terms of biological role, stress-activated serine/threonine-protein kinase involved in cytokines production, endocytosis, cell migration, chromatin remodeling and transcriptional regulation. Following stress, it is phosphorylated and activated by MAP kinase p38-alpha/MAPK14, leading to phosphorylation of substrates. Phosphorylates serine in the peptide sequence, Hyd-X-R-X(2)-S, where Hyd is a large hydrophobic residue. MAPKAPK2 and MAPKAPK3, share the same function and substrate specificity, but MAPKAPK3 kinase activity and level in protein expression are lower compared to MAPKAPK2. Phosphorylates HSP27/HSPB1, KRT18, KRT20, RCSD1, RPS6KA3, TAB3 and TTP/ZFP36. Mediates phosphorylation of HSP27/HSPB1 in response to stress, leading to dissociate HSP27/HSPB1 from large small heat-shock protein (sHsps) oligomers and impair their chaperone activities and ability to protect against oxidative stress effectively. Involved in inflammatory response by regulating tumor necrosis factor (TNF) and IL6 production post-transcriptionally: acts by phosphorylating AU-rich elements (AREs)-binding proteins, such as TTP/ZFP36, leading to regulate the stability and translation of TNF and IL6 mRNAs. Phosphorylation of TTP/ZFP36, a major post-transcriptional regulator of TNF, promotes its binding to 14-3-3 proteins and reduces its ARE mRNA affinity leading to inhibition of dependent degradation of ARE-containing transcript. Involved in toll-like receptor signaling pathway (TLR) in dendritic cells: required for acute TLR-induced macropinocytosis by phosphorylating and activating RPS6KA3. Also acts as a modulator of Polycomb-mediated repression. This Bos taurus (Bovine) protein is MAP kinase-activated protein kinase 3 (MAPKAPK3).